Reading from the N-terminus, the 403-residue chain is Ubiquitin-like modifier-activating enzyme 5 (403 aa).

Positions 81, 102, 125, 148, and 182 each coordinate ATP. 2 residues coordinate Zn(2+): Cys224 and Cys227. Residue Cys248 is the Glycyl thioester intermediate of the active site. The Zn(2+) site is built by Cys301 and Cys306. Positions 333–345 (VVHEDNEWGIELV) match the UFM1-interacting sequence (UIS) motif. Positions 346–376 (SEVSEEELKNSSGPVPTLPEGITVAYTVPKK) are linker. 2 positions are modified to phosphoserine: Ser357 and Ser392. Positions 388 to 403 (DSGESLEDLMARMKNM) match the UFC1-binding sequence (UFC) motif.

Belongs to the ubiquitin-activating E1 family. UBA5 subfamily. As to quaternary structure, homodimer; homodimerization is required for UFM1 activation. Interacts (via UIS motif) with UFM1; binds UFM1 via a trans-binding mechanism in which UFM1 interacts with distinct sites in both subunits of the UBA5 homodimer. Interacts (via C-terminus) with UFC1. Interacts (via UIS motif) with GABARAPL2 and, with lower affinity, with GABARAP and GABARAPL1.

Its subcellular location is the cytoplasm. The protein resides in the nucleus. It is found in the endoplasmic reticulum membrane. The protein localises to the golgi apparatus. Functionally, E1-like enzyme which specifically catalyzes the first step in ufmylation. Activates UFM1 by first adenylating its C-terminal glycine residue with ATP, and thereafter linking this residue to the side chain of a cysteine residue in E1, yielding a UFM1-E1 thioester and free AMP. Activates UFM1 via a trans-binding mechanism, in which UFM1 interacts with distinct sites in both subunits of the UBA5 homodimer. Trans-binding also promotes stabilization of the UBA5 homodimer, and enhances ATP-binding. Transfer of UFM1 from UBA5 to the E2-like enzyme UFC1 also takes place using a trans mechanism. Ufmylation plays a key role in various processes, such as ribosome recycling, response to DNA damage, interferon response or reticulophagy (also called ER-phagy). Ufmylation is essential for erythroid differentiation of both megakaryocytes and erythrocytes. The protein is Ubiquitin-like modifier-activating enzyme 5 of Mus musculus (Mouse).